The sequence spans 488 residues: ATP synthase subunit beta (488 aa).

155–162 provides a ligand contact to ATP; it reads GGAGVGKT. The disordered stretch occupies residues 467–488; that stretch reads GFAPDDQNTDADEKPAAQAAAN.

It belongs to the ATPase alpha/beta chains family. F-type ATPases have 2 components, CF(1) - the catalytic core - and CF(0) - the membrane proton channel. CF(1) has five subunits: alpha(3), beta(3), gamma(1), delta(1), epsilon(1). CF(0) has three main subunits: a(1), b(2) and c(9-12). The alpha and beta chains form an alternating ring which encloses part of the gamma chain. CF(1) is attached to CF(0) by a central stalk formed by the gamma and epsilon chains, while a peripheral stalk is formed by the delta and b chains.

The protein localises to the cell membrane. The catalysed reaction is ATP + H2O + 4 H(+)(in) = ADP + phosphate + 5 H(+)(out). Produces ATP from ADP in the presence of a proton gradient across the membrane. The catalytic sites are hosted primarily by the beta subunits. This is ATP synthase subunit beta from Lacticaseibacillus casei (strain BL23) (Lactobacillus casei).